The primary structure comprises 213 residues: Thymidylate kinase (213 aa).

10–17 (GLEGAGKT) contributes to the ATP binding site.

It belongs to the thymidylate kinase family.

The enzyme catalyses dTMP + ATP = dTDP + ADP. Functionally, phosphorylation of dTMP to form dTDP in both de novo and salvage pathways of dTTP synthesis. This is Thymidylate kinase from Enterobacter sp. (strain 638).